Reading from the N-terminus, the 286-residue chain is NAD kinase (286 aa).

Asp67 acts as the Proton acceptor in catalysis. Residues 67–68 (DG), Arg72, 141–142 (ND), Arg152, Asp171, 182–187 (TAYSLS), and Gln242 each bind NAD(+).

It belongs to the NAD kinase family. Requires a divalent metal cation as cofactor.

It localises to the cytoplasm. It carries out the reaction NAD(+) + ATP = ADP + NADP(+) + H(+). Involved in the regulation of the intracellular balance of NAD and NADP, and is a key enzyme in the biosynthesis of NADP. Catalyzes specifically the phosphorylation on 2'-hydroxyl of the adenosine moiety of NAD to yield NADP. In Ruminiclostridium cellulolyticum (strain ATCC 35319 / DSM 5812 / JCM 6584 / H10) (Clostridium cellulolyticum), this protein is NAD kinase.